Here is a 335-residue protein sequence, read N- to C-terminus: tRNA N6-adenosine threonylcarbamoyltransferase (335 aa).

2 residues coordinate Fe cation: His110 and His114. Substrate contacts are provided by residues 132–136 (LVSGG), Asp165, Gly178, and Asn271. Asp299 contributes to the Fe cation binding site.

The protein belongs to the KAE1 / TsaD family. It depends on Fe(2+) as a cofactor.

Its subcellular location is the cytoplasm. The enzyme catalyses L-threonylcarbamoyladenylate + adenosine(37) in tRNA = N(6)-L-threonylcarbamoyladenosine(37) in tRNA + AMP + H(+). Functionally, required for the formation of a threonylcarbamoyl group on adenosine at position 37 (t(6)A37) in tRNAs that read codons beginning with adenine. Is involved in the transfer of the threonylcarbamoyl moiety of threonylcarbamoyl-AMP (TC-AMP) to the N6 group of A37, together with TsaE and TsaB. TsaD likely plays a direct catalytic role in this reaction. The polypeptide is tRNA N6-adenosine threonylcarbamoyltransferase (Campylobacter jejuni subsp. doylei (strain ATCC BAA-1458 / RM4099 / 269.97)).